Consider the following 243-residue polypeptide: Triosephosphate isomerase (243 aa).

9 to 11 (NWK) is a binding site for substrate. The active-site Electrophile is the His96. Glu165 (proton acceptor) is an active-site residue. Substrate is bound by residues Gly171, Ser204, and 225-226 (GG).

It belongs to the triosephosphate isomerase family. As to quaternary structure, homodimer.

The protein localises to the cytoplasm. It carries out the reaction D-glyceraldehyde 3-phosphate = dihydroxyacetone phosphate. It functions in the pathway carbohydrate biosynthesis; gluconeogenesis. It participates in carbohydrate degradation; glycolysis; D-glyceraldehyde 3-phosphate from glycerone phosphate: step 1/1. Its function is as follows. Involved in the gluconeogenesis. Catalyzes stereospecifically the conversion of dihydroxyacetone phosphate (DHAP) to D-glyceraldehyde-3-phosphate (G3P). The protein is Triosephosphate isomerase of Synechococcus sp. (strain CC9311).